The following is a 167-amino-acid chain: Leukotoxin-activating lysine-acyltransferase LktC serotype T3 (167 aa).

Catalysis depends on residues His22 and Asp91.

The protein belongs to the RTX toxin acyltransferase family.

It is found in the cytoplasm. It catalyses the reaction a fatty acyl-[ACP] + L-lysyl-[protein] = N(6)-(fatty acyl)-L-lysyl-[protein] + holo-[ACP] + H(+). In terms of biological role, involved in fatty acylation of the protoxin (LktA) at two internal lysine residues, thereby converting it to the active toxin. In Mannheimia haemolytica (Pasteurella haemolytica), this protein is Leukotoxin-activating lysine-acyltransferase LktC serotype T3 (lktC).